We begin with the raw amino-acid sequence, 423 residues long: MTDIVDELKWRGLFAQSTDEDALRKALADGPVTFYCGFDPTAASLHVGHLVQVLTMRRLQQAGLKPLALVGGATGQIGDPRPTAERTLNDPETIAAWVQRLRGQIEPFLTFEGPNAATMVNNLDWTAGMSAIEFLRDIGKHFRVNKMLTKDSVARRLESQEGISYTEFSYQLLQGMDFLELYRRHGCTLQQGGSDQWGNLTAGIDLIHRLEPGAVVHALATPLMTKADGTKFGKSESGAVWLDPEMTTPYAFYQFWLNVDDRDVSRYLRILSFKSREELAELEKLTEERPQARNAQRALAEELTTLVHGGEQCAAVIAASKALFGQGDLAELDEATLSAALSEVPHATVAELGPLVDLLVEVGLAPSKSGARRTVKEGGAYVNNVKVVDGEVAPDAGELLHGRWLVLRRGKKNLAAVEVGPVG.

Residue Tyr35 participates in L-tyrosine binding. The 'HIGH' region motif lies at 40 to 49; that stretch reads PTAASLHVGH. L-tyrosine is bound by residues Tyr170 and Gln174. The 'KMSKS' region signature appears at 231-235; the sequence is KFGKS. ATP is bound at residue Lys234. The 67-residue stretch at 353–419 folds into the S4 RNA-binding domain; that stretch reads GPLVDLLVEV…GKKNLAAVEV (67 aa).

It belongs to the class-I aminoacyl-tRNA synthetase family. TyrS type 1 subfamily. As to quaternary structure, homodimer.

It is found in the cytoplasm. The catalysed reaction is tRNA(Tyr) + L-tyrosine + ATP = L-tyrosyl-tRNA(Tyr) + AMP + diphosphate + H(+). In terms of biological role, catalyzes the attachment of tyrosine to tRNA(Tyr) in a two-step reaction: tyrosine is first activated by ATP to form Tyr-AMP and then transferred to the acceptor end of tRNA(Tyr). This chain is Tyrosine--tRNA ligase, found in Streptomyces griseus subsp. griseus (strain JCM 4626 / CBS 651.72 / NBRC 13350 / KCC S-0626 / ISP 5235).